A 344-amino-acid chain; its full sequence is HTH-type transcriptional regulator XC_2801 (344 aa).

The HTH lysR-type domain occupies His3–Thr60. A DNA-binding region (H-T-H motif) is located at residues Phe20 to Gln39.

The protein belongs to the LysR transcriptional regulatory family. Interacts with the cyclic di-GMP effector XC_3703.

With respect to regulation, activity is regulated by cyclic di-GMP. Cyclic di-GMP specifically binds to XC_3703, which inhibits the interaction of the XC_2801-XC_3703 complex with DNA and prevents the transcription of the target genes. Transcriptional regulator that directly or indirectly regulates the expression of virulence-related genes, including flhB, aaeA, fliL and flgG. Binds to the promoter of the target genes only in the presence of XC_3703. The polypeptide is HTH-type transcriptional regulator XC_2801 (Xanthomonas campestris pv. campestris (strain 8004)).